A 116-amino-acid chain; its full sequence is Large ribosomal subunit protein bL17 (116 aa).

It belongs to the bacterial ribosomal protein bL17 family. As to quaternary structure, part of the 50S ribosomal subunit. Contacts protein L32.

The protein is Large ribosomal subunit protein bL17 of Synechocystis sp. (strain ATCC 27184 / PCC 6803 / Kazusa).